We begin with the raw amino-acid sequence, 288 residues long: ATP synthase gamma chain (288 aa).

It belongs to the ATPase gamma chain family. As to quaternary structure, F-type ATPases have 2 components, CF(1) - the catalytic core - and CF(0) - the membrane proton channel. CF(1) has five subunits: alpha(3), beta(3), gamma(1), delta(1), epsilon(1). CF(0) has three main subunits: a, b and c.

It is found in the cell inner membrane. In terms of biological role, produces ATP from ADP in the presence of a proton gradient across the membrane. The gamma chain is believed to be important in regulating ATPase activity and the flow of protons through the CF(0) complex. The polypeptide is ATP synthase gamma chain (Acidithiobacillus ferrooxidans (strain ATCC 23270 / DSM 14882 / CIP 104768 / NCIMB 8455) (Ferrobacillus ferrooxidans (strain ATCC 23270))).